The sequence spans 1140 residues: Eukaryotic translation initiation factor 3 subunit A (1140 aa).

In terms of domain architecture, PCI spans 319–502 (LQRMAAHVLL…HCIYFGTDLT (184 aa)). 6 stretches are compositionally biased toward basic and acidic residues: residues 590-624 (NNAREEEEARRQEEESRKAKLAEQKRLEQEQEERE), 826-903 (RMAQ…RPEG), 925-965 (DRAD…KDNE), 1000-1019 (SRDDKWRRGGDRERDRDFRN), 1026-1053 (RGGDREDDRDRGGFRRNDGPRRNEEQQR), and 1061-1087 (DAPRQSDNRDNRRPAGGDRRDRDRDVR). Disordered regions lie at residues 590–632 (NNAR…QNEI) and 826–1140 (RMAQ…VKRR). Positions 1091–1101 (PKEGGGGGGGN) are enriched in gly residues. The span at 1108–1130 (PRDEKPTTKQRDQPQDKENKAGD) shows a compositional bias: basic and acidic residues.

The protein belongs to the eIF-3 subunit A family. Component of the eukaryotic translation initiation factor 3 (eIF-3) complex. The eIF-3 complex interacts with pix.

It is found in the cytoplasm. In terms of biological role, RNA-binding component of the eukaryotic translation initiation factor 3 (eIF-3) complex, which is involved in protein synthesis of a specialized repertoire of mRNAs and, together with other initiation factors, stimulates binding of mRNA and methionyl-tRNAi to the 40S ribosome. The eIF-3 complex specifically targets and initiates translation of a subset of mRNAs involved in cell proliferation. This Drosophila willistoni (Fruit fly) protein is Eukaryotic translation initiation factor 3 subunit A.